The chain runs to 1198 residues: Chromosome partition protein Smc (1198 aa).

Residue 40–47 (PNGSGKSN) participates in ATP binding. Coiled coils occupy residues 175-211 (ITKY…GQLG) and 322-524 (LGEQ…LAKK). An SMC hinge domain is found at 534-647 (CGTLADLLQV…VTDMEAATRV (114 aa)). A coiled-coil region spans residues 687 to 1042 (SREIQELRQE…AELDKTMSER (356 aa)). The tract at residues 785 to 818 (AEEQSKLTDSIQEAQEALARQEEKNRQASREMEQ) is disordered. A compositionally biased stretch (basic and acidic residues) spans 803 to 818 (ARQEEKNRQASREMEQ).

Belongs to the SMC family. In terms of assembly, homodimer.

The protein localises to the cytoplasm. Its function is as follows. Required for chromosome condensation and partitioning. The polypeptide is Chromosome partition protein Smc (Desulfitobacterium hafniense (strain Y51)).